The chain runs to 309 residues: Tagatose-6-phosphate kinase (309 aa).

It belongs to the carbohydrate kinase PfkB family. LacC subfamily.

The catalysed reaction is D-tagatofuranose 6-phosphate + ATP = D-tagatofuranose 1,6-bisphosphate + ADP + H(+). It participates in carbohydrate metabolism; D-tagatose 6-phosphate degradation; D-glyceraldehyde 3-phosphate and glycerone phosphate from D-tagatose 6-phosphate: step 1/2. The chain is Tagatose-6-phosphate kinase from Streptococcus pyogenes serotype M2 (strain MGAS10270).